We begin with the raw amino-acid sequence, 542 residues long: Chaperonin GroEL 2 (542 aa).

ATP-binding positions include 30-33 (TLGP), K51, 87-91 (DGTTT), G415, and D496.

It belongs to the chaperonin (HSP60) family. In terms of assembly, forms a cylinder of 14 subunits composed of two heptameric rings stacked back-to-back. Interacts with the co-chaperonin GroES.

The protein localises to the cytoplasm. The catalysed reaction is ATP + H2O + a folded polypeptide = ADP + phosphate + an unfolded polypeptide.. Its function is as follows. Together with its co-chaperonin GroES, plays an essential role in assisting protein folding. The GroEL-GroES system forms a nano-cage that allows encapsulation of the non-native substrate proteins and provides a physical environment optimized to promote and accelerate protein folding. This is Chaperonin GroEL 2 from Rhizobium leguminosarum.